A 410-amino-acid polypeptide reads, in one-letter code: Class E basic helix-loop-helix protein 41 (410 aa).

Lysine 31 participates in a covalent cross-link: Glycyl lysine isopeptide (Lys-Gly) (interchain with G-Cter in SUMO2). One can recognise a bHLH domain in the interval threonine 44–leucine 99. A Glycyl lysine isopeptide (Lys-Gly) (interchain with G-Cter in SUMO2) cross-link involves residue lysine 121. The Orange domain maps to phenylalanine 131 to leucine 166. 2 disordered regions span residues isoleucine 209–proline 251 and glutamate 371–proline 410. A Glycyl lysine isopeptide (Lys-Gly) (interchain with G-Cter in SUMO2) cross-link involves residue lysine 240.

As to quaternary structure, homodimer. Heterodimer with BHLHE40/DEC1. Interacts with CIART. Interacts with BMAL1 and RXRA. Interacts with NR0B2 and HNF1A. As to expression, highly expressed in the caudate putamen, pineal gland, granular cell layer of the cerebellum, olfactory bulb, piriform cortex, hippocampus and hypothalamic nuclei. Moderately expressed in skeletal muscle, heart. Weakly expressed in lung.

The protein resides in the nucleus. Transcriptional repressor involved in the regulation of the circadian rhythm by negatively regulating the activity of the clock genes and clock-controlled genes. Acts as the negative limb of a novel autoregulatory feedback loop (DEC loop) which differs from the one formed by the PER and CRY transcriptional repressors (PER/CRY loop). Both these loops are interlocked as it represses the expression of PER1 and in turn is repressed by PER1/2 and CRY1/2. Represses the activity of the circadian transcriptional activator: CLOCK-BMAL1 heterodimer by competing for the binding to E-box elements (5'-CACGTG-3') found within the promoters of its target genes. Negatively regulates its own expression and the expression of DBP and BHLHE41/DEC2. Acts as a corepressor of RXR and the RXR-LXR heterodimers and represses the ligand-induced RXRA/B/G, NR1H3/LXRA, NR1H4 and VDR transactivation activity. Inhibits HNF1A-mediated transactivation of CYP1A2, CYP2E1 and CYP3A11. This Rattus norvegicus (Rat) protein is Class E basic helix-loop-helix protein 41 (Bhlhb3).